Reading from the N-terminus, the 352-residue chain is Mannonate dehydratase (352 aa).

This sequence belongs to the mannonate dehydratase family. Fe(2+) serves as cofactor. The cofactor is Mn(2+).

It carries out the reaction D-mannonate = 2-dehydro-3-deoxy-D-gluconate + H2O. It participates in carbohydrate metabolism; pentose and glucuronate interconversion. Catalyzes the dehydration of D-mannonate. The polypeptide is Mannonate dehydratase (Paraburkholderia phytofirmans (strain DSM 17436 / LMG 22146 / PsJN) (Burkholderia phytofirmans)).